The following is a 306-amino-acid chain: Ribonuclease HIII (306 aa).

One can recognise an RNase H type-2 domain in the interval Trp87–Lys302. Residues Asp93, Glu94, and Asp196 each contribute to the a divalent metal cation site.

Belongs to the RNase HII family. RnhC subfamily. Requires Mn(2+) as cofactor. The cofactor is Mg(2+).

The protein resides in the cytoplasm. It carries out the reaction Endonucleolytic cleavage to 5'-phosphomonoester.. Functionally, endonuclease that specifically degrades the RNA of RNA-DNA hybrids. This is Ribonuclease HIII from Exiguobacterium sibiricum (strain DSM 17290 / CCUG 55495 / CIP 109462 / JCM 13490 / 255-15).